The primary structure comprises 60 residues: Cytotoxin 3 (60 aa).

4 disulfides stabilise this stretch: Cys3–Cys21, Cys14–Cys38, Cys42–Cys53, and Cys54–Cys59.

It belongs to the three-finger toxin family. Short-chain subfamily. Type IA cytotoxin sub-subfamily. As to quaternary structure, monomer in solution; Homodimer and oligomer in the presence of negatively charged lipids forming a pore with a size ranging between 20 and 30 Angstroms. As to expression, expressed by the venom gland.

It localises to the secreted. It is found in the target cell membrane. Shows cytolytic activity on many different cells by forming pore in lipid membranes. In vivo, increases heart rate or kills the animal by cardiac arrest. In addition, it binds to heparin with high affinity, interacts with Kv channel-interacting protein 1 (KCNIP1) in a calcium-independent manner, and binds to integrin alpha-V/beta-3 (ITGAV/ITGB3) with moderate affinity. The polypeptide is Cytotoxin 3 (Naja annulifera (Banded Egyptian cobra)).